A 100-amino-acid chain; its full sequence is Urease subunit gamma (100 aa).

The protein belongs to the urease gamma subunit family. Heterotrimer of UreA (gamma), UreB (beta) and UreC (alpha) subunits. Three heterotrimers associate to form the active enzyme.

It localises to the cytoplasm. The enzyme catalyses urea + 2 H2O + H(+) = hydrogencarbonate + 2 NH4(+). Its pathway is nitrogen metabolism; urea degradation; CO(2) and NH(3) from urea (urease route): step 1/1. In Pseudoalteromonas translucida (strain TAC 125), this protein is Urease subunit gamma.